The sequence spans 181 residues: Large ribosomal subunit protein uL5c (181 aa).

The protein belongs to the universal ribosomal protein uL5 family. Part of the 50S ribosomal subunit; contacts the 5S rRNA.

The protein localises to the plastid. Its subcellular location is the chloroplast. Binds 5S rRNA, forms part of the central protuberance of the 50S subunit. In Porphyra purpurea (Red seaweed), this protein is Large ribosomal subunit protein uL5c (rpl5).